The primary structure comprises 281 residues: 2-dehydro-3-deoxyphosphooctonate aldolase 1 (281 aa).

This sequence belongs to the KdsA family.

It localises to the cytoplasm. It carries out the reaction D-arabinose 5-phosphate + phosphoenolpyruvate + H2O = 3-deoxy-alpha-D-manno-2-octulosonate-8-phosphate + phosphate. Its pathway is carbohydrate biosynthesis; 3-deoxy-D-manno-octulosonate biosynthesis; 3-deoxy-D-manno-octulosonate from D-ribulose 5-phosphate: step 2/3. It participates in bacterial outer membrane biogenesis; lipopolysaccharide biosynthesis. This Pseudomonas putida (strain ATCC 47054 / DSM 6125 / CFBP 8728 / NCIMB 11950 / KT2440) protein is 2-dehydro-3-deoxyphosphooctonate aldolase 1 (kdsA1).